Consider the following 176-residue polypeptide: ATP-dependent protease subunit HslV (176 aa).

The active site involves Thr-2. Residues Gly-157, Cys-160, and Thr-163 each contribute to the Na(+) site.

The protein belongs to the peptidase T1B family. HslV subfamily. A double ring-shaped homohexamer of HslV is capped on each side by a ring-shaped HslU homohexamer. The assembly of the HslU/HslV complex is dependent on binding of ATP.

Its subcellular location is the cytoplasm. The enzyme catalyses ATP-dependent cleavage of peptide bonds with broad specificity.. With respect to regulation, allosterically activated by HslU binding. Protease subunit of a proteasome-like degradation complex believed to be a general protein degrading machinery. This Pectobacterium atrosepticum (strain SCRI 1043 / ATCC BAA-672) (Erwinia carotovora subsp. atroseptica) protein is ATP-dependent protease subunit HslV.